The primary structure comprises 594 residues: Apolipoprotein N-acyltransferase (594 aa).

Residues Met1–Glu29 are compositionally biased toward acidic residues. Residues Met1 to Ile48 form a disordered region. Topologically, residues Met1 to Cys67 are cytoplasmic. Residues Pro30 to Ser40 are compositionally biased toward basic and acidic residues. Residues Ala68–Ile87 traverse the membrane as a helical segment. Over Gly88–Gly116 the chain is Extracellular. A helical membrane pass occupies residues Tyr117–Ser134. The Cytoplasmic portion of the chain corresponds to Gly135 to Gly138. A helical transmembrane segment spans residues Ala139–Ala160. Topologically, residues Val161–Ala221 are extracellular. The chain crosses the membrane as a helical span at residues Val222–Trp239. The Cytoplasmic portion of the chain corresponds to Trp240–Pro251. Residues Ala252–Leu269 form a helical membrane-spanning segment. The Extracellular segment spans residues Val270–Gly554. The 257-residue stretch at Val287 to Leu543 folds into the CN hydrolase domain. The active-site Proton acceptor is the Glu340. The active site involves Lys405. The active-site Nucleophile is the Cys455. A helical membrane pass occupies residues Pro555–Ala572. At Ile573–Arg594 the chain is on the cytoplasmic side.

Belongs to the CN hydrolase family. Apolipoprotein N-acyltransferase subfamily. As to quaternary structure, interacts with Ppm1 (AC A0QZ12) upon coexpression in E.coli, which increases the PPM synthase activity of Ppm1.

It is found in the cell membrane. It catalyses the reaction N-terminal S-1,2-diacyl-sn-glyceryl-L-cysteinyl-[lipoprotein] + a glycerophospholipid = N-acyl-S-1,2-diacyl-sn-glyceryl-L-cysteinyl-[lipoprotein] + a 2-acyl-sn-glycero-3-phospholipid + H(+). It participates in protein modification; lipoprotein biosynthesis (N-acyl transfer). Functionally, catalyzes the phospholipid dependent N-acylation of the N-terminal cysteine of apolipoprotein, the last step in lipoprotein maturation. Can transfer a number of fatty acids (C16 and C19, palmitic and probably tuberculostearic acids respectively are shown). Enhances the polyprenol monophosphomannose (PPM) synthase activity of Ppm1 (AC A0QZ12) without itself having PPM synthase catalytic activity. The sequence is that of Apolipoprotein N-acyltransferase from Mycolicibacterium smegmatis (strain ATCC 700084 / mc(2)155) (Mycobacterium smegmatis).